The chain runs to 602 residues: MDSRVSELFGGCCRPGGGPAVGGTLKARGAGSSSGCGGPKGKKKNGRNRGGKANNPPYLPPEAEDGNIEYKLKLVNPSQYRFEHLVTQMKWRLQEGRGEAVYQIGVEDNGLLVGLAEEEMRASLKTLHRMAEKVGADITVLREREVDYDSDMPRKITEVLVRKVPDNQQFLDLRVAVLGNVDSGKSTLLGVLTQGELDNGRGRARLNLFRHLHEIQSGRTSSISFEILGFNSKGEVVNYSDSRTAEEICESSSKMITFIDLAGHHKYLHTTIFGLTSYCPDCALLLVSANTGIAGTTREHLGLALALKVPFFIVVSKIDLCAKTTVERTVRQLERVLKQPGCHKVPMLVTSEDDAVTAAQQFAQSPNVTPIFTLSSVSGESLDLLKVFLNILPPLTNSKEQEELMQQLTEFQVDEIYTVPEVGTVVGGTLSSGICREGDQLVVGPTDDGCFLELRVCSIQRNRSACRVLRAGQAATLALGDFDRALLRKGMVMVSPEMNPTICSVFEAEIVLLFHATTFRRGFQVTVHVGNVRQTAVVEKIHAKDKLRTGEKAVVRFRFLKHPEYLKVGAKLLFREGVTKGIGHVTDVQAITAGEAQANMGF.

Positions glycine 16 to glutamate 64 are disordered. Positions lysine 40 to glycine 50 are enriched in basic residues. The 229-residue stretch at phenylalanine 170–serine 398 folds into the tr-type G domain. Residues glycine 179 to serine 186, aspartate 260 to histidine 264, and serine 316 to aspartate 319 each bind GTP.

The protein belongs to the TRAFAC class translation factor GTPase superfamily. Classic translation factor GTPase family. GTPBP1 subfamily. Predominantly expressed in thymus, spleen, and testis. Expressed at lower levels in brain, lung, kidney, and ovary.

The sequence is that of GTP-binding protein 2 from Homo sapiens (Human).